Consider the following 535-residue polypeptide: CTP synthase (535 aa).

An amidoligase domain region spans residues 1–267 (MTKYIFVTGG…DKLVCEHMKL (267 aa)). Serine 13 is a binding site for CTP. Residue serine 13 participates in UTP binding. An ATP-binding site is contributed by 14-19 (SLGKGI). Position 54 (tyrosine 54) interacts with L-glutamine. Aspartate 71 contributes to the ATP binding site. The Mg(2+) site is built by aspartate 71 and glutamate 141. CTP is bound by residues 148–150 (DIE), 188–193 (KTKPTQ), and lysine 224. Residues 188-193 (KTKPTQ) and lysine 224 each bind UTP. Positions 292 to 534 (TIGLVGKYVE…IGASVEAANQ (243 aa)) constitute a Glutamine amidotransferase type-1 domain. Glycine 354 is a binding site for L-glutamine. Cysteine 381 functions as the Nucleophile; for glutamine hydrolysis in the catalytic mechanism. Residues 382-385 (LGMQ), glutamate 405, and arginine 462 contribute to the L-glutamine site. Catalysis depends on residues histidine 507 and glutamate 509.

It belongs to the CTP synthase family. Homotetramer. Interacts with BrxC.

The catalysed reaction is UTP + L-glutamine + ATP + H2O = CTP + L-glutamate + ADP + phosphate + 2 H(+). The enzyme catalyses L-glutamine + H2O = L-glutamate + NH4(+). It carries out the reaction UTP + NH4(+) + ATP = CTP + ADP + phosphate + 2 H(+). It participates in pyrimidine metabolism; CTP biosynthesis via de novo pathway; CTP from UDP: step 2/2. With respect to regulation, allosterically activated by GTP, when glutamine is the substrate; GTP has no effect on the reaction when ammonia is the substrate. The allosteric effector GTP functions by stabilizing the protein conformation that binds the tetrahedral intermediate(s) formed during glutamine hydrolysis. Inhibited by the product CTP, via allosteric rather than competitive inhibition. In terms of biological role, catalyzes the ATP-dependent amination of UTP to CTP with either L-glutamine or ammonia as the source of nitrogen. Regulates intracellular CTP levels through interactions with the four ribonucleotide triphosphates. The protein is CTP synthase of Bacillus subtilis (strain 168).